Reading from the N-terminus, the 199-residue chain is SCO2-like protein RBE_0029 (199 aa).

The protein belongs to the SCO1/2 family.

This Rickettsia bellii (strain RML369-C) protein is SCO2-like protein RBE_0029.